The primary structure comprises 768 residues: Cullin-3-A (768 aa).

Residues 677–698 (VAAKQGESDPERKETRQKVDDD) form a disordered region. Residues 682-698 (GESDPERKETRQKVDDD) are compositionally biased toward basic and acidic residues. Positions 698–760 (DRKHEIEAAI…REYLARTPED (63 aa)) constitute a Cullin neddylation domain. Lysine 712 is covalently cross-linked (Glycyl lysine isopeptide (Lys-Gly) (interchain with G-Cter in NEDD8)).

The protein belongs to the cullin family. As to quaternary structure, component of multiple BCR (BTB-CUL3-RBX1) E3 ubiquitin-protein ligase complexes formed of cul3, rbx1 and a variable BTB domain-containing protein acting as both, adapter to cullin and substrate recognition subunit. Interacts with btbd6. In terms of processing, neddylated. Attachment of NEDD8 is required for the E3 ubiquitin-protein ligase activity of the SCF-like complex.

The protein resides in the nucleus. It functions in the pathway protein modification; protein ubiquitination. Functionally, probable core component of cullin-based SCF-like E3 ubiquitin-protein ligase complexes which mediate the ubiquitination and subsequent proteasomal degradation of target proteins. The E3 ubiquitin-protein ligase activity of the complex is dependent on the neddylation of the cullin subunit. Involved in ER-Golgi transport by regulating the size of COPII coats, thereby playing a key role in collagen export, which is required for embryonic stem (ES) cells division. May play a role in the regulation of mittotic entry via ubiquitination of aurka. This Xenopus laevis (African clawed frog) protein is Cullin-3-A (cul3a).